The primary structure comprises 140 residues: Nucleoside diphosphate kinase (140 aa).

Lys11, Phe59, Arg87, Thr93, Arg104, and Asn114 together coordinate ATP. His117 acts as the Pros-phosphohistidine intermediate in catalysis.

The protein belongs to the NDK family. Homotetramer. The cofactor is Mg(2+).

It localises to the cytoplasm. It carries out the reaction a 2'-deoxyribonucleoside 5'-diphosphate + ATP = a 2'-deoxyribonucleoside 5'-triphosphate + ADP. The enzyme catalyses a ribonucleoside 5'-diphosphate + ATP = a ribonucleoside 5'-triphosphate + ADP. Functionally, major role in the synthesis of nucleoside triphosphates other than ATP. The ATP gamma phosphate is transferred to the NDP beta phosphate via a ping-pong mechanism, using a phosphorylated active-site intermediate. This chain is Nucleoside diphosphate kinase, found in Chelativorans sp. (strain BNC1).